The primary structure comprises 629 residues: Pumilio homolog 3 (629 aa).

Basic residues-rich tracts occupy residues 1-10 and 18-37; these read MEGKPRKKSF and PSFKSKGKPGGKPQGKRPFK. A disordered region spans residues 1-92; the sequence is MEGKPRKKSF…EGDERKKPKW (92 aa). Residues 62 to 92 are compositionally biased toward basic and acidic residues; sequence KPTDGKFAKKRKFPGDRIKQEEGDERKKPKW. A Nuclear localization signal motif is present at residues 88 to 100; the sequence is KKPKWDEFKQKKK. A PUM-HD domain is found at 120 to 473; it reads RAKQVWEMVR…ELLEAASPSL (354 aa). 11 Pumilio repeats span residues 160–195, 196–231, 232–260, 272–308, 309–344, 345–380, 381–418, 419–487, 488–534, 535–579, and 580–618; these read HDSTRVLQCFIQFGSDKQRKEVFDELKEHIVELSKS, KYARNIVKKFLMYGSKEQVGEVMLAFKGKVRQMLRH, SEASSVVEYAYNDKAILSQRLMLTEELYG, PTLEKVLEANPGKLESILDEMKQILTPMAQKEAVIKH, SLVHKVFLDFFEHAPDKQRTEMIESIREAVVYMAHT, HDGARVTMHCLWHGTTKDRKVIVKTMKSYIAKFAMG, EYAHLVLLAAFDCIDDTKLVKQIIISEMVSSLSEIISN, KHGK…MVMD, KSCC…MAEH, PAGH…WASV, and NRGAIILCCLLQSADESVAEEVKAMLKSSIPELQRLQNS.

In adult, expressed at high levels in eye and ovary and at lower levels in brain, testis and head kidney. In the adult ovary, prominently expressed in early immature follicles.

Its subcellular location is the nucleus. It is found in the nucleolus. It localises to the nucleoplasm. The protein localises to the chromosome. Inhibits the poly(ADP-ribosyl)ation activity of PARP1 and the degradation of PARP1 by CASP3 following genotoxic stress. Binds to double-stranded RNA or DNA without sequence specificity. Involved in development of the eye and of primordial germ cells. The sequence is that of Pumilio homolog 3 (pum3) from Danio rerio (Zebrafish).